A 727-amino-acid polypeptide reads, in one-letter code: Pre-B-cell leukemia transcription factor-interacting protein 1 (727 aa).

Residues 1 to 10 show a composition bias toward polar residues; the sequence is MASCPDSDNS. The interval 1-135 is disordered; it reads MASCPDSDNS…SPHRSLPSSP (135 aa). A compositionally biased stretch (low complexity) spans 39–53; that stretch reads RAPQSPSRAAAEESA. Phosphoserine is present on S43. Residues 61 to 70 show a composition bias toward polar residues; the sequence is TVSQNESSKS. Phosphoserine is present on residues S130, S134, S147, S148, and S149. T153 bears the Phosphothreonine mark. Coiled-coil stretches lie at residues 269-353 and 380-421; these read QNMA…QGAD and SPGF…SLKE. The Nuclear localization signal signature appears at 488–506; sequence WKTEHWKHKKEASGREKSW. Disordered stretches follow at residues 491–568 and 701–727; these read EHWK…AKDR and KRSG…HRQG. Composition is skewed to basic and acidic residues over residues 498–544, 551–568, and 716–727; these read EASG…EPPR, PSGE…AKDR, and GPREEHSPHRQG. Residues 696–719 carry the Nuclear localization signal motif; the sequence is DKALKKRSGKKDKHLQNRVVGPRE.

Interacts with ESR1, PBX1, PBX2 and PBX3. Interacts with TEX11.

Its subcellular location is the cytoplasm. The protein localises to the cytoskeleton. It is found in the nucleus. In terms of biological role, regulator of pre-B-cell leukemia transcription factors (BPXs) function. Inhibits the binding of PBX1-HOX complex to DNA and blocks the transcriptional activity of E2A-PBX1. Tethers estrogen receptor-alpha (ESR1) to microtubules and allows them to influence estrogen receptors-alpha signaling. This chain is Pre-B-cell leukemia transcription factor-interacting protein 1 (PBXIP1), found in Bos taurus (Bovine).